A 548-amino-acid polypeptide reads, in one-letter code: Esterase-5A (548 aa).

An N-terminal signal peptide occupies residues 1 to 19 (MHLVRWLICLIQLWIQLGA). An intrachain disulfide couples C87 to C106. N95 and N116 each carry an N-linked (GlcNAc...) asparagine glycan. Residue S210 is the Acyl-ester intermediate of the active site. Cysteines 262 and 274 form a disulfide. The N-linked (GlcNAc...) asparagine glycan is linked to N479. Residues C518 and C539 are joined by a disulfide bond.

This sequence belongs to the type-B carboxylesterase/lipase family.

It localises to the secreted. The catalysed reaction is a carboxylic ester + H2O = an alcohol + a carboxylate + H(+). This is Esterase-5A (Est-5A) from Drosophila persimilis (Fruit fly).